The chain runs to 371 residues: tRNA-specific 2-thiouridylase MnmA (371 aa).

ATP is bound by residues 14–21 and methionine 40; that span reads GMSGGVDS. The segment at 100–102 is interaction with target base in tRNA; that stretch reads NPD. Cysteine 105 acts as the Nucleophile in catalysis. Residues cysteine 105 and cysteine 205 are joined by a disulfide bond. An ATP-binding site is contributed by glycine 129. The tract at residues 155–157 is interaction with tRNA; the sequence is KDQ. The Cysteine persulfide intermediate role is filled by cysteine 205. The interval 321 to 322 is interaction with tRNA; it reads RY.

The protein belongs to the MnmA/TRMU family.

The protein localises to the cytoplasm. It catalyses the reaction S-sulfanyl-L-cysteinyl-[protein] + uridine(34) in tRNA + AH2 + ATP = 2-thiouridine(34) in tRNA + L-cysteinyl-[protein] + A + AMP + diphosphate + H(+). Functionally, catalyzes the 2-thiolation of uridine at the wobble position (U34) of tRNA, leading to the formation of s(2)U34. The sequence is that of tRNA-specific 2-thiouridylase MnmA from Bordetella parapertussis (strain 12822 / ATCC BAA-587 / NCTC 13253).